The chain runs to 137 residues: Cellular retinoic acid-binding protein 1 (137 aa).

The Nuclear localization signal signature appears at 21–31 (KALGVNAMLRK). 132–134 (RIY) is a binding site for all-trans-retinoate.

The protein belongs to the calycin superfamily. Fatty-acid binding protein (FABP) family.

The protein localises to the cytoplasm. Its function is as follows. Cytosolic CRABPs may regulate the access of retinoic acid to the nuclear retinoic acid receptors. This chain is Cellular retinoic acid-binding protein 1 (Crabp1), found in Mus musculus (Mouse).